A 748-amino-acid chain; its full sequence is Phosphoenolpyruvate-dependent phosphotransferase system (748 aa).

Residues 1–127 (MLTRLREIVE…RRQLLGVLVV (127 aa)) form the GAF domain. A linker region spans residues 128–170 (QQRELRQYDESEESFLVTLATQMAAILSQSQLTALFGQYRQTR). The segment at 171 to 748 (IRALPAAPGV…GMGGLIRGGL (578 aa)) is PTS EI. Residue His-356 is the Tele-phosphohistidine intermediate of the active site. Phosphoenolpyruvate is bound by residues Arg-462 and Arg-498. Mg(2+) contacts are provided by Glu-597 and Asp-621. Phosphoenolpyruvate contacts are provided by residues 620–621 (ND) and Arg-631. The Proton donor role is filled by Cys-668.

Belongs to the PEP-utilizing enzyme family. Mg(2+) is required as a cofactor.

It is found in the cytoplasm. It catalyses the reaction L-histidyl-[protein] + phosphoenolpyruvate = N(pros)-phospho-L-histidyl-[protein] + pyruvate. Its activity is regulated as follows. Inhibited by GDP and FAD. Its function is as follows. Component of the phosphoenolpyruvate-dependent nitrogen-metabolic phosphotransferase system (nitrogen-metabolic PTS), that seems to be involved in regulating nitrogen metabolism. Enzyme I-Ntr transfers the phosphoryl group from phosphoenolpyruvate (PEP) to the phosphoryl carrier protein (NPr). Could function in the transcriptional regulation of sigma-54 dependent operons in conjunction with the NPr (PtsO) and EIIA-Ntr (PtsN) proteins. Enzyme I-Ntr is specific for NPr. The protein is Phosphoenolpyruvate-dependent phosphotransferase system (ptsP) of Escherichia coli (strain K12).